Here is a 719-residue protein sequence, read N- to C-terminus: Photosystem I P700 chlorophyll a apoprotein A1 (719 aa).

8 helical membrane-spanning segments follow: residues 59–82 (IFGA…FHGA), 145–168 (LYCT…FHYH), 184–208 (LNHH…HVSL), 280–298 (TAHH…GHMY), 335–358 (WHAQ…HHMY), 374–400 (LSLF…IFMV), 422–444 (AIIS…LYIH), and 520–538 (FLVH…LILL). Positions 562 and 571 each coordinate [4Fe-4S] cluster. The next 2 membrane-spanning stretches (helical) occupy residues 578–599 (HVFL…HFSW) and 653–675 (LSAY…MFLF). His-664 serves as a coordination point for chlorophyll a'. Chlorophyll a is bound by residues Met-672 and Tyr-680. Residue Trp-681 coordinates phylloquinone. A helical membrane pass occupies residues 713 to 719 (AVGVTHT).

Belongs to the PsaA/PsaB family. In terms of assembly, the PsaA/B heterodimer binds the P700 chlorophyll special pair and subsequent electron acceptors. PSI consists of a core antenna complex that captures photons, and an electron transfer chain that converts photonic excitation into a charge separation. The eukaryotic PSI reaction center is composed of at least 11 subunits. Requires P700 is a chlorophyll a/chlorophyll a' dimer, A0 is one or more chlorophyll a, A1 is one or both phylloquinones and FX is a shared 4Fe-4S iron-sulfur center. as cofactor.

Its subcellular location is the plastid. It localises to the chloroplast thylakoid membrane. It catalyses the reaction reduced [plastocyanin] + hnu + oxidized [2Fe-2S]-[ferredoxin] = oxidized [plastocyanin] + reduced [2Fe-2S]-[ferredoxin]. Its function is as follows. PsaA and PsaB bind P700, the primary electron donor of photosystem I (PSI), as well as the electron acceptors A0, A1 and FX. PSI is a plastocyanin-ferredoxin oxidoreductase, converting photonic excitation into a charge separation, which transfers an electron from the donor P700 chlorophyll pair to the spectroscopically characterized acceptors A0, A1, FX, FA and FB in turn. Oxidized P700 is reduced on the lumenal side of the thylakoid membrane by plastocyanin. The polypeptide is Photosystem I P700 chlorophyll a apoprotein A1 (Asplenium nidus (Bird's nest fern)).